Reading from the N-terminus, the 244-residue chain is DNA repair protein RecO (244 aa).

This sequence belongs to the RecO family.

Functionally, involved in DNA repair and RecF pathway recombination. This chain is DNA repair protein RecO, found in Polynucleobacter asymbioticus (strain DSM 18221 / CIP 109841 / QLW-P1DMWA-1) (Polynucleobacter necessarius subsp. asymbioticus).